The sequence spans 78 residues: Translation initiation factor IF-1, chloroplastic (78 aa).

Residues 1–72 (MKKQKLIDME…TKGRITYRFH (72 aa)) form the S1-like domain.

Belongs to the IF-1 family. Component of the 30S ribosomal translation pre-initiation complex which assembles on the 30S ribosome in the order IF-2 and IF-3, IF-1 and N-formylmethionyl-tRNA(fMet); mRNA recruitment can occur at any time during PIC assembly.

Its subcellular location is the plastid. It localises to the chloroplast. Its function is as follows. One of the essential components for the initiation of protein synthesis. Stabilizes the binding of IF-2 and IF-3 on the 30S subunit to which N-formylmethionyl-tRNA(fMet) subsequently binds. Helps modulate mRNA selection, yielding the 30S pre-initiation complex (PIC). Upon addition of the 50S ribosomal subunit IF-1, IF-2 and IF-3 are released leaving the mature 70S translation initiation complex. The chain is Translation initiation factor IF-1, chloroplastic from Huperzia lucidula (Shining clubmoss).